A 432-amino-acid polypeptide reads, in one-letter code: Adenylosuccinate synthetase (432 aa).

Residues 13–19 (GDEGKGK) and 41–43 (GHT) contribute to the GTP site. The Proton acceptor role is filled by D14. Mg(2+) is bound by residues D14 and G41. Residues 14 to 17 (DEGK), 39 to 42 (NAGH), T130, R144, Q225, T240, and R304 each bind IMP. The active-site Proton donor is H42. 300–306 (ATTGRKR) serves as a coordination point for substrate. GTP is bound by residues R306, 332 to 334 (KLD), and 414 to 416 (STG).

This sequence belongs to the adenylosuccinate synthetase family. As to quaternary structure, homodimer. The cofactor is Mg(2+).

Its subcellular location is the cytoplasm. It carries out the reaction IMP + L-aspartate + GTP = N(6)-(1,2-dicarboxyethyl)-AMP + GDP + phosphate + 2 H(+). Its pathway is purine metabolism; AMP biosynthesis via de novo pathway; AMP from IMP: step 1/2. In terms of biological role, plays an important role in the de novo pathway of purine nucleotide biosynthesis. Catalyzes the first committed step in the biosynthesis of AMP from IMP. This chain is Adenylosuccinate synthetase, found in Alkalilimnicola ehrlichii (strain ATCC BAA-1101 / DSM 17681 / MLHE-1).